The chain runs to 551 residues: Cytochrome P450 monooxygenase FCK2 (551 aa).

3 helical membrane passes run 8–28 (FDPANYSLFFVLGVLTHVFIF), 35–55 (LHVFNILQAFAVLESSLVYIV), and 69–89 (VTTISSCFTLSTLMGLLISIL). Asn258 is a glycosylation site (N-linked (GlcNAc...) asparagine). Cys493 is a binding site for heme.

It belongs to the cytochrome P450 family. Heme is required as a cofactor.

Its subcellular location is the membrane. Its pathway is secondary metabolite biosynthesis. Cytochrome P450 monooxygenase; part of the gene cluster that mediates the biosynthesis of cytokinins such as fusatin, fusatinic acids or 8-oxofusatin, known for their growth promoting and anti-senescence activities toward host plants. FCK1 is a bifunctional enzyme that performs the first steps in the biosynthesis of Fusarium cytokinins. It first condenses adenosine monophosphate (AMP) with dimethylallyl diphosphate (DMAPP) to yield isoprenyl adenosine monophosphate. It then catalyzes the removal of the phosphoribose to produce isopentenylaldehyde. The cytochrome P450 monooxygenase then converts isopentenylaldehyde to trans-zeatin. A condensation step converts trans-zeatin to fusatin which is further modified to produce fusatinic acid. The mechanism for oxidation of fusatin to fusatinic acid remains unknown. 8-oxofusatin could be produced through several pathways, via direct oxygenation of fusatin, or via the 8-oxo-pentenyladenine intermediate which itself must arise from either the prenylation of 8-oxo-AMP by FCK1 and/or oxygenation of isopentenylaldehyde. Both the FCK3 and FCK4 enzymes act downstream of the identified cytokinins to produce yet unidentified compounds. The polypeptide is Cytochrome P450 monooxygenase FCK2 (Fusarium pseudograminearum (strain CS3096) (Wheat and barley crown-rot fungus)).